The primary structure comprises 327 residues: Putative D-threonate 4-phosphate dehydrogenase (327 aa).

2 residues coordinate substrate: histidine 139 and threonine 140. 3 residues coordinate a divalent metal cation: histidine 169, histidine 213, and histidine 268. Substrate is bound by residues lysine 276, asparagine 285, and arginine 294.

Belongs to the PdxA family. PdxA2 subfamily. As to quaternary structure, homodimer. Requires a divalent metal cation as cofactor.

The enzyme catalyses 4-O-phospho-D-threonate + NAD(+) = dihydroxyacetone phosphate + CO2 + NADH. Functionally, catalyzes the NAD-dependent oxidation and subsequent decarboxylation of D-threonate 4-phosphate to produce dihydroxyacetone phosphate (DHAP). This Salmonella typhi protein is Putative D-threonate 4-phosphate dehydrogenase.